The chain runs to 535 residues: Interferon lambda receptor 1 (535 aa).

Residues 1 to 20 (MWRADRWAPLLLFLLQSALG) form the signal peptide. The Extracellular segment spans residues 21 to 227 (RPRLAPPRNV…FLEAPGDKRA (207 aa)). The Fibronectin type-III domain maps to 26–121 (PPRNVTLFSQ…ESRYLEYLFD (96 aa)). Asparagine 29, asparagine 36, and asparagine 52 each carry an N-linked (GlcNAc...) asparagine glycan. Disulfide bonds link cysteine 73–cysteine 81, cysteine 85–cysteine 149, and cysteine 194–cysteine 216. Asparagine 141 is a glycosylation site (N-linked (GlcNAc...) asparagine). A helical membrane pass occupies residues 228 to 248 (VLAMPSLLLLLIAAVAAGVAW). Over 249–535 (KIMKGNPWFQ…GRMLGDYLVR (287 aa)) the chain is Cytoplasmic. 2 disordered regions span residues 301 to 419 (NRPA…APCG) and 478 to 520 (VNNP…SSVQ). A compositionally biased stretch (acidic residues) spans 321-336 (STEDEDEDTDYDDDGD). The segment covering 350–360 (EKPRVMEHSET) has biased composition (basic and acidic residues). Residues 376–396 (GSDGSSAWDSSDRSWSSTGDS) are compositionally biased toward low complexity. The span at 397–414 (SYKDEVGSSSCLDRKEPD) shows a compositional bias: basic and acidic residues. Over residues 482–503 (EGEEEQEDEEEEEEEEEEEDWE) the composition is skewed to acidic residues.

This sequence belongs to the type II cytokine receptor family. In terms of assembly, heterodimer with IL10RB. In terms of processing, ubiquitinated by FBXO45-containing E3 ligase leading to proteasomal degradation.

The protein localises to the membrane. Functionally, the IFNLR1/IL10RB dimer is a receptor for the cytokine ligands IFNL2 and IFNL3 and mediates their antiviral activity. The ligand/receptor complex stimulate the activation of the JAK/STAT signaling pathway leading to the expression of IFN-stimulated genes (ISG), which contribute to the antiviral state. Determines the cell type specificity of the lambda interferon action. Shows a more restricted pattern of expression in the epithelial tissues thereby limiting responses to lambda interferons primarily to epithelial cells of the respiratory, gastrointestinal, and reproductive tracts. Seems not to be essential for early virus-activated host defense in vaginal infection, but plays an important role in Toll-like receptor (TLR)-induced antiviral defense. Plays a significant role in the antiviral immune defense in the intestinal epithelium. The protein is Interferon lambda receptor 1 (Ifnlr1) of Mus musculus (Mouse).